A 79-amino-acid chain; its full sequence is Gas vesicle protein A2 (79 aa).

The alpha helix 1 stretch occupies residues Leu9–Lys19. The segment at Val23–Leu31 is beta-strand 1. Residues Val32 to Ile34 are beta turn. The tract at residues Glu35–Val43 is beta-strand 2. Residues Val48 to Thr67 form an alpha helix 2 region.

The protein belongs to the gas vesicle GvpA family. As to quaternary structure, the gas vesicle shell is 2 nm thick and consists of a single layer of this protein. It forms helical ribs nearly perpendicular to the long axis of the vesicle.

It localises to the gas vesicle shell. Functionally, gas vesicles are hollow, gas filled proteinaceous nanostructures found in several microbial planktonic microorganisms. They allow positioning of halobacteria at the optimal depth for growth in the poorly aerated shallow brine pools of their habitat. GvpA forms the gas vesicle shell. This protein can replace the p-gvpA gene in the p-vac locus and increases the critical collapse pressure (CCP) of hybrid gas vesicles from 0.66 MPa to 0.90 MPa. In stationary phase gas vesicles about 30 times more GvpA1 is found than GvpA2. Its function is as follows. Expression of 2 c-vac DNA fragments containing 2 divergently transcribed regions (gvpE-gvpF-gvpG-gvpH-gvpI-gvpJ-gvpK-gvpL-gvpM and gvpA-gvpC-gvpN-gvpO) allows H.volcanii to produce gas vesicles. All site-directed mutagenesis is tested in H.volcanii. The protein is Gas vesicle protein A2 of Halobacterium salinarum (strain ATCC 700922 / JCM 11081 / NRC-1) (Halobacterium halobium).